The primary structure comprises 162 residues: G/U mismatch-specific DNA glycosylase (162 aa).

It belongs to the uracil-DNA glycosylase (UDG) superfamily. TDG/mug family. Binds DNA as a monomer.

The protein resides in the cytoplasm. The enzyme catalyses Specifically hydrolyzes mismatched double-stranded DNA and polynucleotides, releasing free uracil.. Excises ethenocytosine and uracil, which can arise by alkylation or deamination of cytosine, respectively, from the corresponding mispairs with guanine in ds-DNA. It is capable of hydrolyzing the carbon-nitrogen bond between the sugar-phosphate backbone of the DNA and the mispaired base. The complementary strand guanine functions in substrate recognition. Required for DNA damage lesion repair in stationary-phase cells. This is G/U mismatch-specific DNA glycosylase from Serratia proteamaculans (strain 568).